The following is a 215-amino-acid chain: Ion-translocating oxidoreductase complex subunit G (215 aa).

The chain crosses the membrane as a helical span at residues 9-29; that stretch reads GLILSLFAIITSGLIALTYFG. FMN phosphoryl threonine is present on T176.

The protein belongs to the RnfG family. As to quaternary structure, the complex is composed of six subunits: RnfA, RnfB, RnfC, RnfD, RnfE and RnfG. The cofactor is FMN.

Its subcellular location is the cell inner membrane. Part of a membrane-bound complex that couples electron transfer with translocation of ions across the membrane. This chain is Ion-translocating oxidoreductase complex subunit G, found in Pseudoalteromonas atlantica (strain T6c / ATCC BAA-1087).